The sequence spans 215 residues: RNA pyrophosphohydrolase (215 aa).

A Nudix hydrolase domain is found at 6–149; it reads GFRPNVGIIL…KRDVYQLALT (144 aa). The Nudix box motif lies at 38–59; it reads GGIKYGETPMQAMYRELHEETG.

Belongs to the Nudix hydrolase family. RppH subfamily. It depends on a divalent metal cation as a cofactor.

Functionally, accelerates the degradation of transcripts by removing pyrophosphate from the 5'-end of triphosphorylated RNA, leading to a more labile monophosphorylated state that can stimulate subsequent ribonuclease cleavage. This is RNA pyrophosphohydrolase from Burkholderia vietnamiensis (strain G4 / LMG 22486) (Burkholderia cepacia (strain R1808)).